The primary structure comprises 339 residues: Transcription factor IIIA (339 aa).

C2H2-type zinc fingers lie at residues 12-36 (FICS…LCKH), 42-66 (FPCT…VLSH), 72-97 (CKCE…KRAH), 104-128 (YVCY…QYIH), 134-158 (FKCS…EKTH), 161-187 (YPCR…AELH), 190-212 (VTCS…KKIH), 219-244 (YRCP…LTFH), and 250-274 (FVCE…FNTH). The disordered stretch occupies residues 271–339 (FNTHDPEKKK…LPVLENLTLK (69 aa)). Over residues 299–309 (KPKKSKKKKKP) the composition is skewed to basic residues. Over residues 311–323 (QTPAMESQEQQPD) the composition is skewed to polar residues.

The protein resides in the nucleus. Its function is as follows. Involved in ribosomal large subunit biogenesis. Interacts with the internal control region (ICR) of approximately 50 bases within the 5S RNA genes, is required for correct transcription of these genes by RNA polymerase III. Also binds the transcribed 5S RNA's. This chain is Transcription factor IIIA (gtf3a), found in Anaxyrus americanus (American toad).